A 386-amino-acid chain; its full sequence is WD repeat-containing protein 89 (386 aa).

WD repeat units follow at residues 21 to 65 (KEPT…LLRE), 68 to 107 (GSPG…EKPA), 112 to 156 (GYPS…QDLS), 167 to 207 (THSD…EEDA), 213 to 253 (NSVS…TDEP), and 318 to 357 (GHAA…KTFT).

In Rattus norvegicus (Rat), this protein is WD repeat-containing protein 89 (Wdr89).